Here is a 652-residue protein sequence, read N- to C-terminus: 2',3'-cyclic-nucleotide 2'-phosphodiesterase/3'-nucleotidase (652 aa).

An N-terminal signal peptide occupies residues 1–24 (MFKRPLTLSLLASLIALTTSTAQA). A divalent metal cation contacts are provided by aspartate 36, histidine 38, aspartate 81, asparagine 121, histidine 230, histidine 262, and histidine 264. Residues tyrosine 445 and 549–555 (YRAYSGK) contribute to the substrate site.

This sequence belongs to the 5'-nucleotidase family. The cofactor is a divalent metal cation.

Its subcellular location is the periplasm. It carries out the reaction a nucleoside 2',3'-cyclic phosphate + H2O = a nucleoside 3'-phosphate + H(+). The catalysed reaction is a ribonucleoside 3'-phosphate + H2O = a ribonucleoside + phosphate. This bifunctional enzyme catalyzes two consecutive reactions during ribonucleic acid degradation. Converts a 2',3'-cyclic nucleotide to a 3'-nucleotide and then the 3'-nucleotide to the corresponding nucleoside and phosphate. This is 2',3'-cyclic-nucleotide 2'-phosphodiesterase/3'-nucleotidase (cpdB) from Yersinia enterocolitica.